Reading from the N-terminus, the 385-residue chain is tRNA pseudouridine synthase D (385 aa).

The active-site Nucleophile is aspartate 86. One can recognise a TRUD domain in the interval 165–305; it reads GFPNYFGNQR…TRFLQKDIAP (141 aa).

The protein belongs to the pseudouridine synthase TruD family.

The catalysed reaction is uridine(13) in tRNA = pseudouridine(13) in tRNA. Responsible for synthesis of pseudouridine from uracil-13 in transfer RNAs. The polypeptide is tRNA pseudouridine synthase D (Helicobacter hepaticus (strain ATCC 51449 / 3B1)).